The following is a 36-amino-acid chain: Pancreatic polypeptide (36 aa).

Tyrosine 36 is modified (tyrosine amide).

This sequence belongs to the NPY family.

The protein resides in the secreted. Functionally, hormone secreted by pancreatic cells that acts as a regulator of pancreatic and gastrointestinal functions probably by signaling through the G protein-coupled receptor NPY4R2. The sequence is that of Pancreatic polypeptide (PPY) from Chinchilla chinchilla (Short-tailed chinchilla).